Reading from the N-terminus, the 400-residue chain is Argininosuccinate synthase (400 aa).

9-17 (AYSGGLDTS) is an ATP binding site. Tyr87 lines the L-citrulline pocket. Gly117 provides a ligand contact to ATP. The L-aspartate site is built by Thr119, Asn123, and Asp124. Asn123 contributes to the L-citrulline binding site. Residues Arg127, Ser176, Ser185, Glu261, and Tyr273 each coordinate L-citrulline.

Belongs to the argininosuccinate synthase family. Type 1 subfamily. As to quaternary structure, homotetramer.

The protein resides in the cytoplasm. The catalysed reaction is L-citrulline + L-aspartate + ATP = 2-(N(omega)-L-arginino)succinate + AMP + diphosphate + H(+). It participates in amino-acid biosynthesis; L-arginine biosynthesis; L-arginine from L-ornithine and carbamoyl phosphate: step 2/3. This chain is Argininosuccinate synthase, found in Chlorobium phaeobacteroides (strain DSM 266 / SMG 266 / 2430).